The sequence spans 277 residues: Shikimate dehydrogenase (NADP(+)) (277 aa).

Shikimate contacts are provided by residues 15–17 (SLS) and T62. K66 acts as the Proton acceptor in catalysis. Shikimate is bound by residues N87 and D102. NADP(+) is bound by residues 127–131 (GAGGA), 151–156 (NRTVDK), and I219. Y221 contacts shikimate. G242 is a binding site for NADP(+).

The protein belongs to the shikimate dehydrogenase family. In terms of assembly, homodimer.

The catalysed reaction is shikimate + NADP(+) = 3-dehydroshikimate + NADPH + H(+). It participates in metabolic intermediate biosynthesis; chorismate biosynthesis; chorismate from D-erythrose 4-phosphate and phosphoenolpyruvate: step 4/7. Functionally, involved in the biosynthesis of the chorismate, which leads to the biosynthesis of aromatic amino acids. Catalyzes the reversible NADPH linked reduction of 3-dehydroshikimate (DHSA) to yield shikimate (SA). The protein is Shikimate dehydrogenase (NADP(+)) of Bacillus cereus (strain G9842).